The primary structure comprises 280 residues: Shikimate dehydrogenase (NADP(+)) (280 aa).

Residues 23-25 and Thr-70 contribute to the shikimate site; that span reads SLS. Lys-74 acts as the Proton acceptor in catalysis. Shikimate is bound by residues Asn-95 and Asp-111. NADP(+) contacts are provided by residues 135 to 139, 158 to 163, and Ile-221; these read GSGGA and NRTISK. Tyr-223 lines the shikimate pocket. Residue Gly-247 participates in NADP(+) binding.

This sequence belongs to the shikimate dehydrogenase family. As to quaternary structure, homodimer.

The catalysed reaction is shikimate + NADP(+) = 3-dehydroshikimate + NADPH + H(+). It participates in metabolic intermediate biosynthesis; chorismate biosynthesis; chorismate from D-erythrose 4-phosphate and phosphoenolpyruvate: step 4/7. Its function is as follows. Involved in the biosynthesis of the chorismate, which leads to the biosynthesis of aromatic amino acids. Catalyzes the reversible NADPH linked reduction of 3-dehydroshikimate (DHSA) to yield shikimate (SA). This Buchnera aphidicola subsp. Cinara cedri (strain Cc) protein is Shikimate dehydrogenase (NADP(+)).